A 193-amino-acid chain; its full sequence is MEPFRIHKGTAAVLMNDNIDTDQIIPKQYLKRIERTGFGKFLFDEWRYDNNRQENPNFPLNAQERKGASILITGDNFGCGSSREHAPWALADYGFRVIIAGGFADIFYMNCMKNGMLPIVMDKDMREQLAKTDAREQITVDLENEIMTTNTHRFHFTIEKMWKEKLLNGLDEISITMQYEQEIKEYERKVALH.

Belongs to the LeuD family. LeuD type 1 subfamily. In terms of assembly, heterodimer of LeuC and LeuD.

The enzyme catalyses (2R,3S)-3-isopropylmalate = (2S)-2-isopropylmalate. Its pathway is amino-acid biosynthesis; L-leucine biosynthesis; L-leucine from 3-methyl-2-oxobutanoate: step 2/4. In terms of biological role, catalyzes the isomerization between 2-isopropylmalate and 3-isopropylmalate, via the formation of 2-isopropylmaleate. In Bacillus cereus (strain B4264), this protein is 3-isopropylmalate dehydratase small subunit.